We begin with the raw amino-acid sequence, 904 residues long: UPF0182 protein CKL_0015 (904 aa).

Transmembrane regions (helical) follow at residues Ser-9–Ile-29, Leu-47–Leu-67, Ile-96–Tyr-116, Ile-157–Val-177, Leu-208–Ile-228, Tyr-253–Val-273, and Ile-279–Val-299.

The protein belongs to the UPF0182 family.

The protein resides in the cell membrane. This is UPF0182 protein CKL_0015 from Clostridium kluyveri (strain ATCC 8527 / DSM 555 / NBRC 12016 / NCIMB 10680 / K1).